The following is a 119-amino-acid chain: Ribonuclease P protein component (119 aa).

Belongs to the RnpA family. In terms of assembly, consists of a catalytic RNA component (M1 or rnpB) and a protein subunit.

It catalyses the reaction Endonucleolytic cleavage of RNA, removing 5'-extranucleotides from tRNA precursor.. Functionally, RNaseP catalyzes the removal of the 5'-leader sequence from pre-tRNA to produce the mature 5'-terminus. It can also cleave other RNA substrates such as 4.5S RNA. The protein component plays an auxiliary but essential role in vivo by binding to the 5'-leader sequence and broadening the substrate specificity of the ribozyme. The sequence is that of Ribonuclease P protein component from Salmonella paratyphi A (strain AKU_12601).